Reading from the N-terminus, the 330-residue chain is Phosphate acyltransferase (330 aa).

The protein belongs to the PlsX family. In terms of assembly, homodimer. Probably interacts with PlsY.

It is found in the cytoplasm. It carries out the reaction a fatty acyl-[ACP] + phosphate = an acyl phosphate + holo-[ACP]. The protein operates within lipid metabolism; phospholipid metabolism. Its function is as follows. Catalyzes the reversible formation of acyl-phosphate (acyl-PO(4)) from acyl-[acyl-carrier-protein] (acyl-ACP). This enzyme utilizes acyl-ACP as fatty acyl donor, but not acyl-CoA. The sequence is that of Phosphate acyltransferase from Streptococcus agalactiae serotype III (strain NEM316).